Consider the following 348-residue polypeptide: Farnesoic acid carboxyl-O-methyltransferase (348 aa).

S-adenosyl-L-methionine is bound at residue Tyr16. Substrate is bound by residues Tyr16 and 19–23 (HSKYQ). Residues Gly57, 57–58 (GC), Asn63, 94–97 (FNDS), 123–125 (SFF), and 140–142 (SYS) contribute to the S-adenosyl-L-methionine site. Substrate is bound at residue 141–145 (YSLHF). Mg(2+) is bound by residues Asn162, Asp247, and Phe249.

Belongs to the methyltransferase superfamily. SABATH family. As to quaternary structure, homodimer. Mg(2+) serves as cofactor. Mostly expressed in leaves and, at very low levels, in roots, stems, flowers and siliques.

It carries out the reaction (2E,6E)-farnesoate + S-adenosyl-L-methionine = methyl (2E,6E)-farnesoate + S-adenosyl-L-homocysteine. The enzyme catalyses juvenile hormone III carboxylate + S-adenosyl-L-methionine = juvenile hormone III + S-adenosyl-L-homocysteine. It functions in the pathway sesquiterpene biosynthesis. With respect to regulation, activated by Mn(2+) ions. Strongly inhibited by Cu(2+), Zn(2+), Fe(3+) and Fe(2+) ions. Moderately inhibited by Na(+) and Ca(2+) ions. Rapidly degraded at temperatures above 40 degrees Celsius. Functionally, may catalyze the production of the insect juvenile hormone methyl farnesoate (MeFA) to trigger defense against insect herbivory. The sequence is that of Farnesoic acid carboxyl-O-methyltransferase from Arabidopsis thaliana (Mouse-ear cress).